The chain runs to 388 residues: Succinate--CoA ligase [ADP-forming] subunit beta (388 aa).

The region spanning 9-244 (KEILRKFGVA…LDEEDPAEIE (236 aa)) is the ATP-grasp domain. Residues Lys46, 53 to 55 (GRG), Glu99, Ala102, and Glu107 contribute to the ATP site. Asn199 and Asp213 together coordinate Mg(2+). Substrate contacts are provided by residues Asn264 and 321–323 (GIM).

It belongs to the succinate/malate CoA ligase beta subunit family. Heterotetramer of two alpha and two beta subunits. It depends on Mg(2+) as a cofactor.

It carries out the reaction succinate + ATP + CoA = succinyl-CoA + ADP + phosphate. The catalysed reaction is GTP + succinate + CoA = succinyl-CoA + GDP + phosphate. The protein operates within carbohydrate metabolism; tricarboxylic acid cycle; succinate from succinyl-CoA (ligase route): step 1/1. Functionally, succinyl-CoA synthetase functions in the citric acid cycle (TCA), coupling the hydrolysis of succinyl-CoA to the synthesis of either ATP or GTP and thus represents the only step of substrate-level phosphorylation in the TCA. The beta subunit provides nucleotide specificity of the enzyme and binds the substrate succinate, while the binding sites for coenzyme A and phosphate are found in the alpha subunit. This chain is Succinate--CoA ligase [ADP-forming] subunit beta, found in Burkholderia cenocepacia (strain ATCC BAA-245 / DSM 16553 / LMG 16656 / NCTC 13227 / J2315 / CF5610) (Burkholderia cepacia (strain J2315)).